The following is a 194-amino-acid chain: Ion-translocating oxidoreductase complex subunit A (194 aa).

6 helical membrane-spanning segments follow: residues 4–24 (LVLIMVSAILVNNFVLVQFLG), 39–59 (IGLSLATTFVLTLAAMCSYLV), 71–91 (FLRTISFILVIAVTVQFTEMV), 102–122 (VLGIFLPLITTNCIVLGVALL), 131–151 (FITATVNGFAAGLGFSLVLVL), and 172–192 (AIGMITAGLMSLAFMGFAGLI).

This sequence belongs to the NqrDE/RnfAE family. As to quaternary structure, the complex is composed of six subunits: RnfA, RnfB, RnfC, RnfD, RnfE and RnfG.

The protein localises to the cell inner membrane. Part of a membrane-bound complex that couples electron transfer with translocation of ions across the membrane. In Ectopseudomonas mendocina (strain ymp) (Pseudomonas mendocina), this protein is Ion-translocating oxidoreductase complex subunit A.